The sequence spans 91 residues: Small ribosomal subunit protein uS19 (91 aa).

The protein belongs to the universal ribosomal protein uS19 family.

In terms of biological role, protein S19 forms a complex with S13 that binds strongly to the 16S ribosomal RNA. The polypeptide is Small ribosomal subunit protein uS19 (Methylobacillus flagellatus (strain ATCC 51484 / DSM 6875 / VKM B-1610 / KT)).